Here is a 285-residue protein sequence, read N- to C-terminus: 4-hydroxybenzoate octaprenyltransferase (285 aa).

The next 9 helical transmembrane spans lie at 19–39 (IGSL…ADGL), 42–62 (WHVL…GCVI), 82–102 (LPSG…LVVC), 104–124 (FLLV…GIVL), 136–156 (YLPQ…AYAA), 166–186 (WLLF…YAMV), 210–230 (IIGL…SQLA), 233–253 (GIYY…QWLI), and 265–285 (FLNN…SVLI).

It belongs to the UbiA prenyltransferase family. It depends on Mg(2+) as a cofactor.

The protein localises to the cell inner membrane. It catalyses the reaction all-trans-octaprenyl diphosphate + 4-hydroxybenzoate = 4-hydroxy-3-(all-trans-octaprenyl)benzoate + diphosphate. It functions in the pathway cofactor biosynthesis; ubiquinone biosynthesis. In terms of biological role, catalyzes the prenylation of para-hydroxybenzoate (PHB) with an all-trans polyprenyl group. Mediates the second step in the final reaction sequence of ubiquinone-8 (UQ-8) biosynthesis, which is the condensation of the polyisoprenoid side chain with PHB, generating the first membrane-bound Q intermediate 3-octaprenyl-4-hydroxybenzoate. In Aliivibrio fischeri (strain ATCC 700601 / ES114) (Vibrio fischeri), this protein is 4-hydroxybenzoate octaprenyltransferase.